A 289-amino-acid polypeptide reads, in one-letter code: Formamidopyrimidine-DNA glycosylase (289 aa).

Residue Pro2 is the Schiff-base intermediate with DNA of the active site. Glu3 serves as the catalytic Proton donor. Lys61 acts as the Proton donor; for beta-elimination activity in catalysis. DNA is bound by residues His96, Arg115, and Lys161. The segment at 247–281 (SAYGQENLPCPRCGAPIKREKFMNRSSFSCPRCQP) adopts an FPG-type zinc-finger fold. Arg271 functions as the Proton donor; for delta-elimination activity in the catalytic mechanism.

It belongs to the FPG family. In terms of assembly, monomer. Requires Zn(2+) as cofactor.

It carries out the reaction Hydrolysis of DNA containing ring-opened 7-methylguanine residues, releasing 2,6-diamino-4-hydroxy-5-(N-methyl)formamidopyrimidine.. The enzyme catalyses 2'-deoxyribonucleotide-(2'-deoxyribose 5'-phosphate)-2'-deoxyribonucleotide-DNA = a 3'-end 2'-deoxyribonucleotide-(2,3-dehydro-2,3-deoxyribose 5'-phosphate)-DNA + a 5'-end 5'-phospho-2'-deoxyribonucleoside-DNA + H(+). Functionally, involved in base excision repair of DNA damaged by oxidation or by mutagenic agents. Acts as a DNA glycosylase that recognizes and removes damaged bases. Has a preference for oxidized purines, such as 7,8-dihydro-8-oxoguanine (8-oxoG). Has AP (apurinic/apyrimidinic) lyase activity and introduces nicks in the DNA strand. Cleaves the DNA backbone by beta-delta elimination to generate a single-strand break at the site of the removed base with both 3'- and 5'-phosphates. The protein is Formamidopyrimidine-DNA glycosylase of Rhodococcus erythropolis (strain PR4 / NBRC 100887).